We begin with the raw amino-acid sequence, 501 residues long: MTTEEAMPEKAKCPTLEITKQDFFQEAKTLIAQHYEKINENKVQGTSINVFRKKHQKPKSGKYIPLEIDKKVTRDVVQEHRAALRRICFPKELSKSEHLQEPPQRISFKEPHIFSRRERCRPIDLITKGQVKLDKIMTIIEPVSKKMETAKQQHFEESRNRMLELLYPFPVHLYLQPGTSNLELLKEPDKAFYDWRGFVLTRSFRLACDSRRVSFSQSSSIFRDYYSKTFKTLIKKERQPIKPEPKSQPRIKGTPNKTDKLDSKVKRIGPHIEIFQVFRERKKFMITPKLIRMVTVMQAHVRGWLERKRLQRVMTKALDHGPDMKAVINMYGRLIHRVRYRRGLWRTRQILNLAELEEWMDRKKFYEIMFAKREDWPKIERNELPNFFSDCGHFPTQKQVDDTWDLVHQDGKEKYSELIKKSKAIEMLFTLYPPEGAHVPDSTLLKSTWLRPIVNGEEGYRYIVNGHPALKRANIRVVGKLVARSIRERKMRQHYKSCKVE.

Positions 237–247 are enriched in basic and acidic residues; that stretch reads ERQPIKPEPKS. A disordered region spans residues 237–262; it reads ERQPIKPEPKSQPRIKGTPNKTDKLD. An IQ domain is found at 290-319; it reads LIRMVTVMQAHVRGWLERKRLQRVMTKALD.

The sequence is that of IQ domain-containing protein M from Homo sapiens (Human).